The following is a 466-amino-acid chain: Cytochrome P450 85A1 (466 aa).

Residues 1–21 (MVLAVLIGVLVGIVLVSSLLL) form a helical membrane-spanning segment. C416 is a heme binding site.

It belongs to the cytochrome P450 family. The cofactor is heme.

The protein resides in the membrane. It catalyses the reaction 6-deoxoteasterone + reduced [NADPH--hemoprotein reductase] + O2 = 6alpha-hydroxyteasterone + oxidized [NADPH--hemoprotein reductase] + H2O + H(+). It carries out the reaction 6alpha-hydroxytyphasterol + reduced [NADPH--hemoprotein reductase] + O2 = teasterone + oxidized [NADPH--hemoprotein reductase] + 2 H2O + H(+). The enzyme catalyses 3-dehydro-6-deoxoteasterone + reduced [NADPH--hemoprotein reductase] + O2 = 3-dehydro-6alpha-hydroxyteasterone + oxidized [NADPH--hemoprotein reductase] + H2O + H(+). The catalysed reaction is 3-dehydro-6alpha-hydroxyteasterone + reduced [NADPH--hemoprotein reductase] + O2 = 3-dehydroteasterone + oxidized [NADPH--hemoprotein reductase] + 2 H2O + H(+). It catalyses the reaction 6-deoxotyphasterol + reduced [NADPH--hemoprotein reductase] + O2 = 6alpha-hydroxytyphasterol + oxidized [NADPH--hemoprotein reductase] + H2O + H(+). It carries out the reaction 6alpha-hydroxytyphasterol + reduced [NADPH--hemoprotein reductase] + O2 = typhasterol + oxidized [NADPH--hemoprotein reductase] + 2 H2O + H(+). The enzyme catalyses 6-deoxocastasterone + reduced [NADPH--hemoprotein reductase] + O2 = 6alpha-hydroxycastasterone + oxidized [NADPH--hemoprotein reductase] + H2O + H(+). The catalysed reaction is 6alpha-hydroxycastasterone + reduced [NADPH--hemoprotein reductase] + O2 = castasterone + oxidized [NADPH--hemoprotein reductase] + 2 H2O + H(+). It catalyses the reaction 3-dehydro-6-deoxoteasterone + 2 reduced [NADPH--hemoprotein reductase] + 2 O2 = 3-dehydroteasterone + 2 oxidized [NADPH--hemoprotein reductase] + 3 H2O + 2 H(+). It carries out the reaction 6-deoxocastasterone + 2 reduced [NADPH--hemoprotein reductase] + 2 O2 = castasterone + 2 oxidized [NADPH--hemoprotein reductase] + 3 H2O + 2 H(+). The enzyme catalyses 6-deoxoteasterone + 2 reduced [NADPH--hemoprotein reductase] + 2 O2 = teasterone + 2 oxidized [NADPH--hemoprotein reductase] + 3 H2O + 2 H(+). The catalysed reaction is 6-deoxotyphasterol + 2 reduced [NADPH--hemoprotein reductase] + 2 O2 = typhasterol + 2 oxidized [NADPH--hemoprotein reductase] + 3 H2O + 2 H(+). Its pathway is plant hormone biosynthesis; brassinosteroid biosynthesis. Functionally, involved in reduction steps of the biosynthesis of plant campesterol-derivative steroids, ending to castasterone (CS) but missing brassinolide (BL). Catalyzes the C6-oxidation step in brassinosteroids biosynthesis; the conversion of 6-deoxoteasterone (6-deoxoTE) to teasterone (TE), 3-dehydro-6-deoxoteasterone (6-deoxo3DT, 6-deoxo-3-DHT) to 3-dehydroteasterone (3DT, 3-DHT), 6-deoxotyphasterol (6-deoxoTY) to typhasterol (TY) and of 6-deoxocastasterone (6-deoxoCS) to castasterone (CS). The chain is Cytochrome P450 85A1 from Brachypodium distachyon (Purple false brome).